We begin with the raw amino-acid sequence, 126 residues long: MARITAEDCNKIIPDRFRLVVLATRYAKLLNYKVETNQIKKEKRDKPPVISLRRIAAGKVSVEQLEQDLINSLRTKTMIEPIVNQDESEDIEEKFEYLPEVCITEDYSDLDDQIFIDETGDDFEDK.

The protein belongs to the RNA polymerase subunit omega family. In terms of assembly, the RNAP catalytic core consists of 2 alpha, 1 beta, 1 beta' and 1 omega subunit. When a sigma factor is associated with the core the holoenzyme is formed, which can initiate transcription.

The catalysed reaction is RNA(n) + a ribonucleoside 5'-triphosphate = RNA(n+1) + diphosphate. Its function is as follows. Promotes RNA polymerase assembly. Latches the N- and C-terminal regions of the beta' subunit thereby facilitating its interaction with the beta and alpha subunits. This chain is DNA-directed RNA polymerase subunit omega, found in Rickettsia felis (strain ATCC VR-1525 / URRWXCal2) (Rickettsia azadi).